The following is a 383-amino-acid chain: Putative protein FAM157A (383 aa).

Disordered regions lie at residues 1–21 (MGPL…PLPK) and 177–254 (ATAR…PLGR).

Belongs to the FAM157 family.

The chain is Putative protein FAM157A (FAM157A) from Homo sapiens (Human).